The chain runs to 155 residues: Riboflavin synthase (155 aa).

This sequence belongs to the DMRL synthase family.

It carries out the reaction 2 6,7-dimethyl-8-(1-D-ribityl)lumazine + H(+) = 5-amino-6-(D-ribitylamino)uracil + riboflavin. It functions in the pathway cofactor biosynthesis; riboflavin biosynthesis; riboflavin from 2-hydroxy-3-oxobutyl phosphate and 5-amino-6-(D-ribitylamino)uracil: step 2/2. This chain is Riboflavin synthase (ribC), found in Aeropyrum pernix (strain ATCC 700893 / DSM 11879 / JCM 9820 / NBRC 100138 / K1).